A 235-amino-acid polypeptide reads, in one-letter code: Class B acid phosphatase (235 aa).

The signal sequence occupies residues 1-22 (MKNLLKLSAIAILAASAVSTFA). The active-site Nucleophile is D67. Mg(2+)-binding residues include D67 and D69. Residue D69 is the Proton donor of the active site. Residues 135–136 (TG) and K175 each bind substrate. D190 provides a ligand contact to Mg(2+).

It belongs to the class B bacterial acid phosphatase family. In terms of assembly, homotetramer. The cofactor is Mg(2+).

It is found in the periplasm. The catalysed reaction is a phosphate monoester + H2O = an alcohol + phosphate. Its function is as follows. Dephosphorylates several organic phosphate monoesters. Also has a phosphotransferase activity catalyzing the transfer of low-energy phosphate groups from organic phosphate monoesters to free hydroxyl groups of various organic compounds. In Haemophilus parainfluenzae (strain T3T1), this protein is Class B acid phosphatase.